The following is a 183-amino-acid chain: Ribonuclease H (183 aa).

One can recognise an RNase H type-1 domain in the interval 2–151; it reads SQARFIAFSD…VDQLAQAAAR (150 aa). Mg(2+) contacts are provided by D11, E57, D79, and D143.

This sequence belongs to the RNase H family. As to quaternary structure, monomer. Requires Mg(2+) as cofactor.

The protein resides in the cytoplasm. The enzyme catalyses Endonucleolytic cleavage to 5'-phosphomonoester.. Its function is as follows. Endonuclease that specifically degrades the RNA of RNA-DNA hybrids. The polypeptide is Ribonuclease H (Anaeromyxobacter dehalogenans (strain 2CP-1 / ATCC BAA-258)).